Reading from the N-terminus, the 517-residue chain is Crotonobetaine/carnitine--CoA ligase (517 aa).

This sequence belongs to the ATP-dependent AMP-binding enzyme family.

It catalyses the reaction 4-(trimethylamino)butanoate + ATP + CoA = 4-(trimethylamino)butanoyl-CoA + AMP + diphosphate. It carries out the reaction crotonobetaine + ATP + CoA = crotonobetainyl-CoA + AMP + diphosphate. The enzyme catalyses (R)-carnitine + ATP + CoA = (R)-carnitinyl-CoA + AMP + diphosphate. It participates in amine and polyamine metabolism; carnitine metabolism. Its function is as follows. Catalyzes the transfer of CoA to carnitine, generating the initial carnitinyl-CoA needed for the CaiB reaction cycle. Also has activity toward crotonobetaine and gamma-butyrobetaine. The protein is Crotonobetaine/carnitine--CoA ligase of Salmonella enteritidis PT4 (strain P125109).